Reading from the N-terminus, the 192-residue chain is Bifunctional protein PyrR (192 aa).

Substrate contacts are provided by residues 49–50, Arg90, 111–119, Arg144, and Val168; these read SG and DDVLFSGRT. The short motif at 107–119 is the PRPP-binding element; it reads VILVDDVLFSGRT.

This sequence belongs to the purine/pyrimidine phosphoribosyltransferase family. PyrR subfamily.

The enzyme catalyses UMP + diphosphate = 5-phospho-alpha-D-ribose 1-diphosphate + uracil. In terms of biological role, regulates the transcription of the pyrimidine nucleotide (pyr) operon in response to exogenous pyrimidines. Functionally, also displays a weak uracil phosphoribosyltransferase activity which is not physiologically significant. The protein is Bifunctional protein PyrR of Corynebacterium glutamicum (strain ATCC 13032 / DSM 20300 / JCM 1318 / BCRC 11384 / CCUG 27702 / LMG 3730 / NBRC 12168 / NCIMB 10025 / NRRL B-2784 / 534).